We begin with the raw amino-acid sequence, 134 residues long: ATP synthase epsilon chain, plastid (134 aa).

This sequence belongs to the ATPase epsilon chain family. As to quaternary structure, F-type ATPases have 2 components, CF(1) - the catalytic core - and CF(0) - the membrane proton channel. CF(1) has five subunits: alpha(3), beta(3), gamma(1), delta(1), epsilon(1). CF(0) has three main subunits: a, b and c.

It is found in the plastid membrane. In terms of biological role, produces ATP from ADP in the presence of a proton gradient across the membrane. The polypeptide is ATP synthase epsilon chain, plastid (Prototheca wickerhamii).